A 239-amino-acid chain; its full sequence is tRNA1(Val) (adenine(37)-N6)-methyltransferase (239 aa).

It belongs to the methyltransferase superfamily. tRNA (adenine-N(6)-)-methyltransferase family.

The protein resides in the cytoplasm. It catalyses the reaction adenosine(37) in tRNA1(Val) + S-adenosyl-L-methionine = N(6)-methyladenosine(37) in tRNA1(Val) + S-adenosyl-L-homocysteine + H(+). Functionally, specifically methylates the adenine in position 37 of tRNA(1)(Val) (anticodon cmo5UAC). This Vibrio vulnificus (strain CMCP6) protein is tRNA1(Val) (adenine(37)-N6)-methyltransferase.